Here is a 325-residue protein sequence, read N- to C-terminus: Putative gluconeogenesis factor (325 aa).

Belongs to the gluconeogenesis factor family.

It is found in the cytoplasm. Functionally, required for morphogenesis under gluconeogenic growth conditions. In Streptococcus pyogenes serotype M1, this protein is Putative gluconeogenesis factor.